We begin with the raw amino-acid sequence, 789 residues long: MSDGITGALRNAASVVAPDAIRRRFGAKFAVAFIVVLVVIAGAGVFAFQSTETTVEHQTTRQLAESNQLEADAIGAWMEQQRTHARSVSQDEALRDDRRAAPYILLKDQLLPADVVSMHLVNETRGTVVASTELAIEGRSLAELDAPWTTAAVPEGPGNDSAVWATEQSYRSPVLNDEPVMAFASSVPKREGAHLVVVTRIQPQVDRLSDANSTRRTTILNTGDEPVLDSNSRFDAGALTDSIAAVRNDTTAATTTVSNGRVYALSATPHTDWVTVTSVDTGEAFAVRDTVGQTVTVLVVLAVISLAIVGIALGRHTVTPLKRLRNRAQDIESGTFDVDLSTRRIDEVGRLYGSFDDMRVSLQDRIQEAEAAVEEANAAKAEAEELRTDAEDAQAEAERAKATAEAASERLQERAADYSEVMQAVADGDLTERLDEDADEEAMRAVATEFNAMLDGLEATIAQVAGFADEVADETLQVATGAEEIETTSQTVSERIQEIADGAIQQHDDLERAAGEMDELSASIQEVAASSATVAETAADAVERGEAGRDAAESAIDDMAEIESLSADAVDQILALQERMSDIGDIIEFITDIAEQTNMLALNANIEAARADKDGDGFAVVANEVKDLAEETKQAAADIESEIQAVQAETDETVADIRATSEHIDDGVSTVERAAAAIEDTVDAIEDANHGIQEISDATEDQADATQSVVRRVDDVADISQHVTEDAEQVSAAAEEQSASVAEIARSADDLRDRADALATTVNQFETRADADEPDADTTVDASADDTGD.

The next 2 membrane-spanning stretches (helical) occupy residues 29-49 (FAVA…FAFQ) and 294-314 (TVTV…IALG). HAMP domains lie at 315–367 (RHTV…DRIQ) and 409–462 (ERLQ…ATIA). Positions 481-717 (GAEEIETTSQ…SVVRRVDDVA (237 aa)) constitute a Methyl-accepting transducer domain. The disordered stretch occupies residues 763-789 (NQFETRADADEPDADTTVDASADDTGD). A compositionally biased stretch (acidic residues) spans 772 to 789 (DEPDADTTVDASADDTGD).

Belongs to the methyl-accepting chemotaxis (MCP) protein family. Methylated by CheR.

It localises to the cell membrane. In terms of biological role, potentially involved in chemo- or phototactic signal transduction. This chain is Transducer protein Htr6 (htr6), found in Halobacterium salinarum (strain ATCC 29341 / DSM 671 / R1).